A 122-amino-acid polypeptide reads, in one-letter code: Large ribosomal subunit protein uL14 (122 aa).

Belongs to the universal ribosomal protein uL14 family. Part of the 50S ribosomal subunit. Forms a cluster with proteins L3 and L19. In the 70S ribosome, L14 and L19 interact and together make contacts with the 16S rRNA in bridges B5 and B8.

Functionally, binds to 23S rRNA. Forms part of two intersubunit bridges in the 70S ribosome. The chain is Large ribosomal subunit protein uL14 from Borrelia hermsii (strain HS1 / DAH).